Here is a 195-residue protein sequence, read N- to C-terminus: Dephospho-CoA kinase (195 aa).

The region spanning 3–195 (KIGLTGGIGS…ANMKNVIAEI (193 aa)) is the DPCK domain. 11–16 (GSGKST) is a binding site for ATP.

This sequence belongs to the CoaE family.

It localises to the cytoplasm. It carries out the reaction 3'-dephospho-CoA + ATP = ADP + CoA + H(+). Its pathway is cofactor biosynthesis; coenzyme A biosynthesis; CoA from (R)-pantothenate: step 5/5. Functionally, catalyzes the phosphorylation of the 3'-hydroxyl group of dephosphocoenzyme A to form coenzyme A. The sequence is that of Dephospho-CoA kinase from Corynebacterium glutamicum (Brevibacterium saccharolyticum).